The chain runs to 1025 residues: Retinoblastoma-related protein (1025 aa).

The interval 1–20 is disordered; it reads MEDHPPKPSIPTADASLSNH. The tract at residues 422-623 is domain A; it reads TPVTTAMTTA…EKGSSMYNSL (202 aa). Residues 422–875 form a pocket region; it reads TPVTTAMTTA…NEIFIPAVKP (454 aa). Positions 624–744 are spacer; the sequence is TVARPALSAE…PGAGGETCAE (121 aa). Residues 745–875 form a domain B region; the sequence is TAINVFFSKI…NEIFIPAVKP (131 aa).

It belongs to the retinoblastoma protein (RB) family.

It localises to the nucleus. Regulator of biological processes that recruits a histone deacetylase to control gene transcription. May play a role in the entry into mitosis, negatively regulating the cell proliferation. Formation of stable complexes with geminiviridae replication-associated proteins may create a cellular environment which favors viral DNA replication. This is Retinoblastoma-related protein (pRB) from Camellia sinensis (Tea plant).